We begin with the raw amino-acid sequence, 520 residues long: Probable E3 ubiquitin-protein ligase rbrA (520 aa).

The span at 1–42 (MTDDEMYEDYDVDDDSAEESGNESLDDTEYDDAATQEFDFDE) shows a compositional bias: acidic residues. The tract at residues 1–51 (MTDDEMYEDYDVDDDSAEESGNESLDDTEYDDAATQEFDFDENQPQRSLGK) is disordered. The tract at residues 135 to 354 (GNVSCLICLE…GGYYNCNKYD (220 aa)) is TRIAD supradomain. Zn(2+) contacts are provided by C139, C142, C156, H158, C161, C164, C184, C189, C228, C233, C250, C252, C257, C260, H268, C273, C300, and C303. An RING-type 1 zinc finger spans residues 139–189 (CLICLEDYPPTQTFALICNHRYCLPCYKNYLEIKVSEGPECIYTPCPAPKC). Residues 208–273 (ERFNNFILKS…EIGDHMPCPC (66 aa)) form an IBR-type zinc finger. The segment at 300-333 (CPECRSPIEKNGGCMHMTCRKNAGGCGFEFCWLC) adopts an RING-type 2; atypical zinc-finger fold. C313 is a catalytic residue. Positions 318, 325, 330, 333, 340, and 350 each coordinate Zn(2+).

This sequence belongs to the RBR family.

It carries out the reaction [E2 ubiquitin-conjugating enzyme]-S-ubiquitinyl-L-cysteine + [acceptor protein]-L-lysine = [E2 ubiquitin-conjugating enzyme]-L-cysteine + [acceptor protein]-N(6)-ubiquitinyl-L-lysine.. Its pathway is protein modification; protein ubiquitination. Functionally, might act as an E3 ubiquitin-protein ligase. Appears to be required for normal cell-type proportioning and cell sorting during multicellular development. In addition to being necessary for a normal percentage of prestalk cells and the organization of the slug, rbrA is also necessary for spore cell viability. In Dictyostelium discoideum (Social amoeba), this protein is Probable E3 ubiquitin-protein ligase rbrA (rbrA).